The chain runs to 599 residues: ATP-dependent rRNA helicase SPB4 (599 aa).

Positions 7 to 35 (WDTLDYTLQPWIRTAVDAMGYETMTPVQA) match the Q motif motif. Residues 38–224 (IPLFARNKDV…KTGMRNPVKV (187 aa)) enclose the Helicase ATP-binding domain. ATP is bound at residue 51–58 (SVTGSGKT). The DEAD box motif lies at 172 to 175 (DEAD). Positions 248 to 415 (KLQLLLTLLN…GLPEIIRAWI (168 aa)) constitute a Helicase C-terminal domain. A coiled-coil region spans residues 501 to 561 (QREKARKLAK…LKRKAIEEKL (61 aa)). A disordered region spans residues 559-599 (EKLIENSDDSDNEVETDWKDIVRQRKKKKTNSGMQGDFGDL). The span at 564–573 (NSDDSDNEVE) shows a compositional bias: acidic residues.

The protein belongs to the DEAD box helicase family. DDX55/SPB4 subfamily. In terms of assembly, component of pre-60S ribosomal complexes.

Its subcellular location is the nucleus. It is found in the nucleolus. The enzyme catalyses ATP + H2O = ADP + phosphate + H(+). ATP-binding RNA helicase involved in the biogenesis of 60S ribosomal subunits. Binds 90S pre-ribosomal particles and dissociates from pre-60S ribosomal particles after processing of 27SB pre-rRNA. Required for the normal formation of 18S rRNA through the processing of pre-rRNAs at sites A0, A1 and A2, and the normal formation of 25S and 5.8S rRNAs through the processing of pre-rRNAs at sites C1 and C2. The protein is ATP-dependent rRNA helicase SPB4 of Eremothecium gossypii (strain ATCC 10895 / CBS 109.51 / FGSC 9923 / NRRL Y-1056) (Yeast).